A 186-amino-acid polypeptide reads, in one-letter code: Acireductone dioxygenase (186 aa).

Residues H103, H105, E109, and H147 each coordinate Fe(2+). Ni(2+) contacts are provided by H103, H105, E109, and H147.

It belongs to the acireductone dioxygenase (ARD) family. As to quaternary structure, monomer. Requires Fe(2+) as cofactor. The cofactor is Ni(2+).

The enzyme catalyses 1,2-dihydroxy-5-(methylsulfanyl)pent-1-en-3-one + O2 = 3-(methylsulfanyl)propanoate + CO + formate + 2 H(+). It carries out the reaction 1,2-dihydroxy-5-(methylsulfanyl)pent-1-en-3-one + O2 = 4-methylsulfanyl-2-oxobutanoate + formate + 2 H(+). It functions in the pathway amino-acid biosynthesis; L-methionine biosynthesis via salvage pathway; L-methionine from S-methyl-5-thio-alpha-D-ribose 1-phosphate: step 5/6. Its function is as follows. Catalyzes 2 different reactions between oxygen and the acireductone 1,2-dihydroxy-3-keto-5-methylthiopentene (DHK-MTPene) depending upon the metal bound in the active site. Fe-containing acireductone dioxygenase (Fe-ARD) produces formate and 2-keto-4-methylthiobutyrate (KMTB), the alpha-ketoacid precursor of methionine in the methionine recycle pathway. Ni-containing acireductone dioxygenase (Ni-ARD) produces methylthiopropionate, carbon monoxide and formate, and does not lie on the methionine recycle pathway. In Parasynechococcus marenigrum (strain WH8102), this protein is Acireductone dioxygenase.